The chain runs to 513 residues: ATP synthase subunit alpha (513 aa).

169-176 (GDRQTGKT) is a binding site for ATP.

Belongs to the ATPase alpha/beta chains family. F-type ATPases have 2 components, CF(1) - the catalytic core - and CF(0) - the membrane proton channel. CF(1) has five subunits: alpha(3), beta(3), gamma(1), delta(1), epsilon(1). CF(0) has three main subunits: a(1), b(2) and c(9-12). The alpha and beta chains form an alternating ring which encloses part of the gamma chain. CF(1) is attached to CF(0) by a central stalk formed by the gamma and epsilon chains, while a peripheral stalk is formed by the delta and b chains.

It is found in the cell inner membrane. It carries out the reaction ATP + H2O + 4 H(+)(in) = ADP + phosphate + 5 H(+)(out). In terms of biological role, produces ATP from ADP in the presence of a proton gradient across the membrane. The alpha chain is a regulatory subunit. This Shewanella baltica (strain OS223) protein is ATP synthase subunit alpha.